A 274-amino-acid chain; its full sequence is Penicillin-insensitive murein endopeptidase (274 aa).

The signal sequence occupies residues 1 to 19; sequence MNKTAIALLALLASSASLA. 3 disulfide bridges follow: Cys44/Cys265, Cys187/Cys235, and Cys216/Cys223. The Zn(2+) site is built by His110, His113, Asp120, Asp147, His150, and His211. Residues 228-274 form a disordered region; that stretch reads LPPSGDGCGAELQSWFEPPKPGTTKPEKKTPPPLPPSCQALLDEHVI.

It belongs to the peptidase M74 family. In terms of assembly, dimer. Zn(2+) is required as a cofactor.

Its subcellular location is the periplasm. With respect to regulation, inhibited by Zn(2+) at 10 mM and by metal chelating agents EDTA and 1,10-phenanthroline. In terms of biological role, murein endopeptidase that cleaves the D-alanyl-meso-2,6-diamino-pimelyl amide bond that connects peptidoglycan strands. Likely plays a role in the removal of murein from the sacculus and could also play a role in the integration of nascent murein strands into the sacculus. The chain is Penicillin-insensitive murein endopeptidase (mepA) from Escherichia coli (strain K12).